Reading from the N-terminus, the 280-residue chain is Bifunctional protein FolD (280 aa).

Residues 165–167 (GRS), S190, and I231 contribute to the NADP(+) site.

Belongs to the tetrahydrofolate dehydrogenase/cyclohydrolase family. Homodimer.

It catalyses the reaction (6R)-5,10-methylene-5,6,7,8-tetrahydrofolate + NADP(+) = (6R)-5,10-methenyltetrahydrofolate + NADPH. It carries out the reaction (6R)-5,10-methenyltetrahydrofolate + H2O = (6R)-10-formyltetrahydrofolate + H(+). It participates in one-carbon metabolism; tetrahydrofolate interconversion. Functionally, catalyzes the oxidation of 5,10-methylenetetrahydrofolate to 5,10-methenyltetrahydrofolate and then the hydrolysis of 5,10-methenyltetrahydrofolate to 10-formyltetrahydrofolate. The protein is Bifunctional protein FolD of Moorella thermoacetica (strain ATCC 39073 / JCM 9320).